The following is a 383-amino-acid chain: Pleckstrin homology domain-containing family A member 1 (383 aa).

2 consecutive PH domains span residues 7 to 112 and 191 to 289; these read QNRI…KAIK and AVIK…GAIV. Phosphoserine is present on Val-284. Residues 362 to 383 form a disordered region; it reads LPRSSQGTSRSRLSLQESQLPK. Residues 370 to 383 are compositionally biased toward low complexity; the sequence is SRSRLSLQESQLPK.

In terms of assembly, interacts with MPDZ and PTPN13.

The protein localises to the cytoplasm. It localises to the cell membrane. It is found in the nucleus. In terms of biological role, binds specifically to phosphatidylinositol 3,4-diphosphate (PtdIns3,4P2), but not to other phosphoinositides. May recruit other proteins to the plasma membrane. The chain is Pleckstrin homology domain-containing family A member 1 (Plekha1) from Mus musculus (Mouse).